A 236-amino-acid chain; its full sequence is Protein YIPF6 (236 aa).

At Ala2 the chain carries N-acetylalanine. Residues 2–84 (AEAVESPGDP…HVLYPRKSNT (83 aa)) lie on the Cytoplasmic side of the membrane. Phosphoserine is present on Ser7. The chain crosses the membrane as a helical span at residues 85 to 105 (LLRDWDLWGPLILCVTLALML). The Lumenal portion of the chain corresponds to 106–115 (QRGSVDSEKD). A helical membrane pass occupies residues 116-136 (GGPQFAEVFVIVWFGAVTITL). Topologically, residues 137 to 146 (NSKLLGGNIS) are cytoplasmic. A helical membrane pass occupies residues 147-167 (FFQSLCVLGYCILPLTMAMLV). The Lumenal portion of the chain corresponds to 168-184 (CRLVLLAEPGPVNFMVR). The helical transmembrane segment at 185-205 (LFVVIIMFAWSIVASTAFLAD) threads the bilayer. The Cytoplasmic portion of the chain corresponds to 206 to 212 (SQPPNRK). Residues 213–233 (ALAVYPVFLFYFVISWMILTF) traverse the membrane as a helical segment. The Lumenal segment spans residues 234-236 (TPQ).

It belongs to the YIP1 family. As to quaternary structure, predominantly interacts with YIPF1 or YIPF2, but may also form a ternary complex with YIPF1 and YIPF2. This interaction may stabilize YIPF1 and YIPF2.

It is found in the golgi apparatus membrane. Functionally, may be required for stable YIPF1 and YIPF2 protein expression. The chain is Protein YIPF6 (YIPF6) from Bos taurus (Bovine).